A 223-amino-acid polypeptide reads, in one-letter code: MRLRNKPWVKEYLEKNDKYLISWDKETKINLSDLFNNKKQPVHLEIGCGKGNFITNHALKESDINFIGMEKEETVVGVALKKTLAEFEQRNKEVTNLKYFNDFAEDLSDIFAPSSIDKIYLNFSDPWPKARHSKKRLTYRTFLDIYANIIKSHGILEFKTDNDGLFAFSLEEIAENKNWELIYQTTDLYSDIEALKNNIPTEYETKFHTAGKNINKLIIKKTF.

The S-adenosyl-L-methionine site is built by Glu-45, Glu-70, and Asp-125. Asp-125 is an active-site residue. Substrate is bound by residues Lys-129, Asp-161, and 201 to 204 (TEYE).

It belongs to the class I-like SAM-binding methyltransferase superfamily. TrmB family.

The enzyme catalyses guanosine(46) in tRNA + S-adenosyl-L-methionine = N(7)-methylguanosine(46) in tRNA + S-adenosyl-L-homocysteine. The protein operates within tRNA modification; N(7)-methylguanine-tRNA biosynthesis. Its function is as follows. Catalyzes the formation of N(7)-methylguanine at position 46 (m7G46) in tRNA. In Mesoplasma florum (strain ATCC 33453 / NBRC 100688 / NCTC 11704 / L1) (Acholeplasma florum), this protein is tRNA (guanine-N(7)-)-methyltransferase.